The following is a 334-amino-acid chain: HTH-type transcriptional repressor PurR (334 aa).

The region spanning 2–56 is the HTH lacI-type domain; that stretch reads ATIKDVARLAGVSTTTVSHVINKTRFVAEATQEKVMKAVDELNYAPSAVARSLKC. The H-T-H motif DNA-binding region spans 4–23; it reads IKDVARLAGVSTTTVSHVIN. Residues 48–56 mediate DNA binding; that stretch reads SAVARSLKC. Residues Phe-73, Lys-189, Phe-220, and Asp-274 each coordinate hypoxanthine.

As to quaternary structure, homodimer.

The protein operates within purine metabolism; purine nucleotide biosynthesis [regulation]. Its function is as follows. Is the main repressor of the genes involved in the de novo synthesis of purine nucleotides, regulating purB, purC, purEK, purF, purHD, purL, purMN and guaBA expression. PurR is allosterically activated to bind its cognate DNA by binding the purine corepressors, hypoxanthine or guanine, thereby effecting transcription repression. The sequence is that of HTH-type transcriptional repressor PurR from Vibrio parahaemolyticus serotype O3:K6 (strain RIMD 2210633).